The sequence spans 609 residues: Proline--tRNA ligase (609 aa).

Belongs to the class-II aminoacyl-tRNA synthetase family. ProS type 1 subfamily. Homodimer.

The protein resides in the cytoplasm. It carries out the reaction tRNA(Pro) + L-proline + ATP = L-prolyl-tRNA(Pro) + AMP + diphosphate. Functionally, catalyzes the attachment of proline to tRNA(Pro) in a two-step reaction: proline is first activated by ATP to form Pro-AMP and then transferred to the acceptor end of tRNA(Pro). As ProRS can inadvertently accommodate and process non-cognate amino acids such as alanine and cysteine, to avoid such errors it has two additional distinct editing activities against alanine. One activity is designated as 'pretransfer' editing and involves the tRNA(Pro)-independent hydrolysis of activated Ala-AMP. The other activity is designated 'posttransfer' editing and involves deacylation of mischarged Ala-tRNA(Pro). The misacylated Cys-tRNA(Pro) is not edited by ProRS. This Synechococcus sp. (strain JA-3-3Ab) (Cyanobacteria bacterium Yellowstone A-Prime) protein is Proline--tRNA ligase.